A 150-amino-acid chain; its full sequence is MFEEMILEKVRKEAERIAEEQGLEIFDVQYRRESRGWVLRIIIDNPVGYVSVRDCELFSREIERFLDREDLIEHSYTLEVSSPGLDRPLRGPKDYVRFTGKLAKIVTKDGKTFIGRIESFVDGTITISDEKRKYEINIDDVKRANLEVEF.

Belongs to the RimP family.

It localises to the cytoplasm. In terms of biological role, required for maturation of 30S ribosomal subunits. In Thermotoga petrophila (strain ATCC BAA-488 / DSM 13995 / JCM 10881 / RKU-1), this protein is Ribosome maturation factor RimP.